A 313-amino-acid chain; its full sequence is WD repeat-containing protein 82-B (313 aa).

WD repeat units follow at residues glutamate 19–threonine 58, glycine 105–leucine 144, histidine 146–phenylalanine 184, aspartate 192–threonine 231, asparagine 236–valine 276, and lysine 280–aspartate 313.

It belongs to the WD repeat SWD2 family. As to quaternary structure, component of the SET1/COMPASS complex. Component of the PNUTS-PP1 phosphatase complex.

Its subcellular location is the nucleus. The protein resides in the chromosome. It localises to the cytoplasm. Regulatory component of the SET1/COMPASS complex implicated in the tethering of this complex to transcriptional start sites of active genes. Facilitates histone H3 'Lys-4' methylation (H3K4me) via recruitment of the SETD1A or SETD1B to the 'Ser-5' phosphorylated C-terminal domain (CTD) of RNA polymerase II large subunit (POLR2A). Component of the PNUTS-PP1 protein phosphatase complex, a protein phosphatase 1 (PP1) complex that promotes RNA polymerase II transcription pause-release, allowing transcription elongation. This Xenopus laevis (African clawed frog) protein is WD repeat-containing protein 82-B (wdr82-b).